A 229-amino-acid polypeptide reads, in one-letter code: 2-C-methyl-D-erythritol 4-phosphate cytidylyltransferase (229 aa).

The protein belongs to the IspD/TarI cytidylyltransferase family. IspD subfamily.

It carries out the reaction 2-C-methyl-D-erythritol 4-phosphate + CTP + H(+) = 4-CDP-2-C-methyl-D-erythritol + diphosphate. The protein operates within isoprenoid biosynthesis; isopentenyl diphosphate biosynthesis via DXP pathway; isopentenyl diphosphate from 1-deoxy-D-xylulose 5-phosphate: step 2/6. In terms of biological role, catalyzes the formation of 4-diphosphocytidyl-2-C-methyl-D-erythritol from CTP and 2-C-methyl-D-erythritol 4-phosphate (MEP). The chain is 2-C-methyl-D-erythritol 4-phosphate cytidylyltransferase from Bacillus pumilus (strain SAFR-032).